Consider the following 569-residue polypeptide: Proline--tRNA ligase (569 aa).

This sequence belongs to the class-II aminoacyl-tRNA synthetase family. ProS type 1 subfamily. Homodimer.

The protein resides in the cytoplasm. The enzyme catalyses tRNA(Pro) + L-proline + ATP = L-prolyl-tRNA(Pro) + AMP + diphosphate. Its function is as follows. Catalyzes the attachment of proline to tRNA(Pro) in a two-step reaction: proline is first activated by ATP to form Pro-AMP and then transferred to the acceptor end of tRNA(Pro). As ProRS can inadvertently accommodate and process non-cognate amino acids such as alanine and cysteine, to avoid such errors it has two additional distinct editing activities against alanine. One activity is designated as 'pretransfer' editing and involves the tRNA(Pro)-independent hydrolysis of activated Ala-AMP. The other activity is designated 'posttransfer' editing and involves deacylation of mischarged Ala-tRNA(Pro). The misacylated Cys-tRNA(Pro) is not edited by ProRS. The sequence is that of Proline--tRNA ligase from Campylobacter jejuni (strain RM1221).